A 122-amino-acid polypeptide reads, in one-letter code: Large ribosomal subunit protein uL14c (122 aa).

Belongs to the universal ribosomal protein uL14 family. As to quaternary structure, part of the 50S ribosomal subunit.

Its subcellular location is the plastid. It localises to the chloroplast. In terms of biological role, binds to 23S rRNA. In Arabis hirsuta (Hairy rock-cress), this protein is Large ribosomal subunit protein uL14c.